The primary structure comprises 302 residues: Sulfate adenylyltransferase subunit 2 (302 aa).

This sequence belongs to the PAPS reductase family. CysD subfamily. As to quaternary structure, heterodimer composed of CysD, the smaller subunit, and CysN.

It carries out the reaction sulfate + ATP + H(+) = adenosine 5'-phosphosulfate + diphosphate. It participates in sulfur metabolism; hydrogen sulfide biosynthesis; sulfite from sulfate: step 1/3. Its function is as follows. With CysN forms the ATP sulfurylase (ATPS) that catalyzes the adenylation of sulfate producing adenosine 5'-phosphosulfate (APS) and diphosphate, the first enzymatic step in sulfur assimilation pathway. APS synthesis involves the formation of a high-energy phosphoric-sulfuric acid anhydride bond driven by GTP hydrolysis by CysN coupled to ATP hydrolysis by CysD. This Shigella boydii serotype 4 (strain Sb227) protein is Sulfate adenylyltransferase subunit 2.